Here is a 624-residue protein sequence, read N- to C-terminus: Chaperone protein HtpG (624 aa).

The interval 1 to 336 (MKGQETRGFQ…SSDLPLNVSR (336 aa)) is a; substrate-binding. Residues 337–552 (EILQDSTVTR…ADEMSTQMAK (216 aa)) are b. Residues 553–624 (LFAAAGQKVP…IRRMNQLLVS (72 aa)) form a c region.

The protein belongs to the heat shock protein 90 family. Homodimer.

Its subcellular location is the cytoplasm. Functionally, molecular chaperone. Has ATPase activity. This Escherichia coli O139:H28 (strain E24377A / ETEC) protein is Chaperone protein HtpG.